The following is a 614-amino-acid chain: Kelch-like protein 40 (614 aa).

A BTB domain is found at 33-100 (IDCVLKIQGK…IYTSEIEITE (68 aa)). A BACK domain is found at 135-237 (CLAIFRLGLL…PQDYIKNKVE (103 aa)). Kelch repeat units lie at residues 353–405 (QLFV…ESDN), 406–455 (SIYL…SHDN), 456–503 (LVYV…VHKG), 505–550 (ILIA…SMNG), and 552–606 (LYAI…AARL).

It belongs to the KLHL40 family. Component of the BCR(KLHL40) E3 ubiquitin ligase complex.

The protein resides in the cytoplasm. It localises to the myofibril. Its subcellular location is the sarcomere. It is found in the a band. The protein localises to the i band. Its function is as follows. Substrate-specific adapter of a BCR (BTB-CUL3-RBX1) E3 ubiquitin ligase complex that acts as a key regulator of skeletal muscle development. This chain is Kelch-like protein 40 (klhl40), found in Xenopus tropicalis (Western clawed frog).